A 536-amino-acid chain; its full sequence is Thiamine transport system permease protein ThiP (536 aa).

Helical transmembrane passes span 16-36, 58-78, 95-115, 134-154, 199-219, 240-260, 291-311, 334-354, 373-393, 404-424, 463-483, and 506-526; these read GLCA…ALWL, FSFW…VFLA, LCAM…LSVY, FSPY…LPMA, VAAL…SLGG, PARA…LVLL, DALL…AVVV, SLRI…MLLW, LSGM…FFLL, ADGI…LKVL, AQAL…VALF, and DGAV…TLIE. Positions 56-261 constitute an ABC transmembrane type-1 1 domain; it reads VRFSFWQAFL…VCCLALVLLS (206 aa). In terms of domain architecture, ABC transmembrane type-1 2 spans 331 to 525; the sequence is VWTSLRIALA…LLCFTLFTLI (195 aa).

Belongs to the binding-protein-dependent transport system permease family. In terms of assembly, the complex is composed of two ATP-binding proteins (ThiQ), two transmembrane proteins (ThiP) and a solute-binding protein (ThiB).

The protein localises to the cell inner membrane. Part of the ABC transporter complex ThiBPQ involved in thiamine import. Probably responsible for the translocation of the substrate across the membrane. Is also involved in thiamine pyrophosphate transport. This chain is Thiamine transport system permease protein ThiP, found in Salmonella typhimurium (strain LT2 / SGSC1412 / ATCC 700720).